A 376-amino-acid chain; its full sequence is Queuine tRNA-ribosyltransferase accessory subunit 2 (376 aa).

Cys-323, Cys-325, Cys-328, and His-354 together coordinate Zn(2+).

It belongs to the queuine tRNA-ribosyltransferase family. QTRT2 subfamily. As to quaternary structure, heterodimer of a catalytic subunit and an accessory subunit. Requires Zn(2+) as cofactor.

It is found in the cytoplasm. Its function is as follows. Non-catalytic subunit of the queuine tRNA-ribosyltransferase (TGT) that catalyzes the base-exchange of a guanine (G) residue with queuine (Q) at position 34 (anticodon wobble position) in tRNAs with GU(N) anticodons (tRNA-Asp, -Asn, -His and -Tyr), resulting in the hypermodified nucleoside queuosine (7-(((4,5-cis-dihydroxy-2-cyclopenten-1-yl)amino)methyl)-7-deazaguanosine). This chain is Queuine tRNA-ribosyltransferase accessory subunit 2, found in Caenorhabditis briggsae.